We begin with the raw amino-acid sequence, 290 residues long: Porphobilinogen deaminase (290 aa).

Cysteine 237 is subject to S-(dipyrrolylmethanemethyl)cysteine.

The protein belongs to the HMBS family. As to quaternary structure, monomer. Dipyrromethane serves as cofactor.

It catalyses the reaction 4 porphobilinogen + H2O = hydroxymethylbilane + 4 NH4(+). Its pathway is porphyrin-containing compound metabolism; protoporphyrin-IX biosynthesis; coproporphyrinogen-III from 5-aminolevulinate: step 2/4. In terms of biological role, tetrapolymerization of the monopyrrole PBG into the hydroxymethylbilane pre-uroporphyrinogen in several discrete steps. This is Porphobilinogen deaminase from Clostridium kluyveri (strain NBRC 12016).